Reading from the N-terminus, the 315-residue chain is Cobalamin biosynthesis protein CobD (315 aa).

Helical transmembrane passes span 1 to 21, 50 to 70, 79 to 99, 151 to 171, 209 to 229, 250 to 270, and 291 to 311; these read MLDIIIAVIIDWIIGDPYWFP, VFGGFIVIIVSSISFLIPFII, VIYHVINIFFLWTVLAAKSLH, DGIIAPLLFAMLGGAPLAMMY, VTGIIMCLVSPIIGGNIFYSI, AAAAASGIMLGGTNIYFGEVV, and IILMYSSEILFIIIYVIIICF.

The protein belongs to the CobD/CbiB family.

Its subcellular location is the cell membrane. Its pathway is cofactor biosynthesis; adenosylcobalamin biosynthesis. In terms of biological role, converts cobyric acid to cobinamide by the addition of aminopropanol on the F carboxylic group. The sequence is that of Cobalamin biosynthesis protein CobD from Clostridium acetobutylicum (strain ATCC 824 / DSM 792 / JCM 1419 / IAM 19013 / LMG 5710 / NBRC 13948 / NRRL B-527 / VKM B-1787 / 2291 / W).